Consider the following 263-residue polypeptide: Large ribosomal subunit protein uL10m (263 aa).

The N-terminal 29 residues, 1-29, are a transit peptide targeting the mitochondrion; that stretch reads MPFSVEVEVFFLLVEDKLGWLPTLQPVRH. The tract at residues 241–263 is disordered; the sequence is QHEGDCATSTEGKPHPPDPAPDS.

Belongs to the universal ribosomal protein uL10 family. As to quaternary structure, component of the mitochondrial ribosome large subunit (39S) which comprises a 16S rRNA and about 50 distinct proteins.

It is found in the mitochondrion. In Rattus norvegicus (Rat), this protein is Large ribosomal subunit protein uL10m (Mrpl10).